A 408-amino-acid chain; its full sequence is Peptidase T (408 aa).

Position 78 (His-78) interacts with Zn(2+). Asp-80 is an active-site residue. Residue Asp-141 coordinates Zn(2+). Glu-175 (proton acceptor) is an active-site residue. Zn(2+)-binding residues include Glu-176, Asp-198, and His-380.

It belongs to the peptidase M20B family. Zn(2+) serves as cofactor.

The protein resides in the cytoplasm. The catalysed reaction is Release of the N-terminal residue from a tripeptide.. Its function is as follows. Cleaves the N-terminal amino acid of tripeptides. The protein is Peptidase T of Clostridium botulinum (strain Loch Maree / Type A3).